The primary structure comprises 514 residues: Calcium-binding mitochondrial carrier protein SCaMC-2 (514 aa).

Residues 1-234 (MARPRSLVSP…EKQTGMWWRH (234 aa)) lie on the Mitochondrial intermembrane side of the membrane. EF-hand domains follow at residues 56–91 (EHER…LGVH), 92–122 (RTEL…HYLR), 123–158 (DHEK…LGVN), and 159–194 (ISEQ…HSAE). Aspartate 69, asparagine 71, aspartate 73, aspartate 80, aspartate 105, aspartate 107, aspartate 109, glutamine 111, and glutamate 116 together coordinate Ca(2+). 3 Solcar repeats span residues 229–315 (GMWW…IKRI), 323–408 (LGIH…LKNA), and 420–508 (PGVF…LKLT). Residues 235-252 (LVAGGGAGAVSRTCTAPL) form a helical membrane-spanning segment. Over 253–289 (DRLKVLMQVHASRSNNMSILGGFTHMIREGGFRSLWR) the chain is Mitochondrial matrix. A helical transmembrane segment spans residues 290 to 309 (GNGINVIKIAPESAIKFMAY). Over 310 to 332 (EQIKRIIGSNQETLGIHERFVAG) the chain is Mitochondrial intermembrane. A helical membrane pass occupies residues 333 to 346 (SLAGVIAQSSIYPM). Residues 347–382 (EVLKTRMALRKTGQYQGVLDCGKKILLQEGLSAFYK) are Mitochondrial matrix-facing. Residues 383 to 402 (GYVPNMLGIIPYAGIDLAVY) form a helical membrane-spanning segment. Over 403-425 (ETLKNAWLQRYATSSADPGVFVL) the chain is Mitochondrial intermembrane. The chain crosses the membrane as a helical span at residues 426-443 (LACGTVSSTCGQLASYPL). Over 444-482 (ALVRTRMQAEASVEGAPQMTMSKLFKHIVKTEGAFGLYR) the chain is Mitochondrial matrix. A helical membrane pass occupies residues 483–502 (GLAPNFMKVIPAVSISYVVY). Residues 503 to 514 (ENLKLTLGVQSR) lie on the Mitochondrial intermembrane side of the membrane.

It belongs to the mitochondrial carrier (TC 2.A.29) family.

Its subcellular location is the mitochondrion inner membrane. Functionally, calcium-dependent mitochondrial solute carrier. This Xenopus laevis (African clawed frog) protein is Calcium-binding mitochondrial carrier protein SCaMC-2 (slc25a25).